The primary structure comprises 208 residues: Adenylyl-sulfate kinase (208 aa).

35–42 (GLSGSGKS) provides a ligand contact to ATP. The active-site Phosphoserine intermediate is serine 109.

Belongs to the APS kinase family.

The enzyme catalyses adenosine 5'-phosphosulfate + ATP = 3'-phosphoadenylyl sulfate + ADP + H(+). The protein operates within sulfur metabolism; hydrogen sulfide biosynthesis; sulfite from sulfate: step 2/3. Catalyzes the synthesis of activated sulfate. The polypeptide is Adenylyl-sulfate kinase (Geotalea uraniireducens (strain Rf4) (Geobacter uraniireducens)).